A 220-amino-acid chain; its full sequence is Demethylmenaquinone methyltransferase (220 aa).

S-adenosyl-L-methionine-binding positions include Thr47, Asp67, and 93 to 94; that span reads DA.

It belongs to the class I-like SAM-binding methyltransferase superfamily. MenG/UbiE family.

It carries out the reaction a 2-demethylmenaquinol + S-adenosyl-L-methionine = a menaquinol + S-adenosyl-L-homocysteine + H(+). It functions in the pathway quinol/quinone metabolism; menaquinone biosynthesis; menaquinol from 1,4-dihydroxy-2-naphthoate: step 2/2. In terms of biological role, methyltransferase required for the conversion of demethylmenaquinol (DMKH2) to menaquinol (MKH2). This is Demethylmenaquinone methyltransferase from Thermus thermophilus (strain ATCC BAA-163 / DSM 7039 / HB27).